A 274-amino-acid polypeptide reads, in one-letter code: Thymidylate synthase (274 aa).

Arginine 21 contributes to the dUMP binding site. Histidine 51 contributes to the (6R)-5,10-methylene-5,6,7,8-tetrahydrofolate binding site. DUMP is bound at residue arginine 123 to arginine 124. The Nucleophile role is filled by cysteine 156. Residues arginine 176 to aspartate 179, asparagine 187, and histidine 217 to tyrosine 219 each bind dUMP. Residue aspartate 179 participates in (6R)-5,10-methylene-5,6,7,8-tetrahydrofolate binding. Serine 273 is a (6R)-5,10-methylene-5,6,7,8-tetrahydrofolate binding site.

It belongs to the thymidylate synthase family. Bacterial-type ThyA subfamily. Homodimer.

The protein localises to the cytoplasm. The catalysed reaction is dUMP + (6R)-5,10-methylene-5,6,7,8-tetrahydrofolate = 7,8-dihydrofolate + dTMP. It participates in pyrimidine metabolism; dTTP biosynthesis. In terms of biological role, catalyzes the reductive methylation of 2'-deoxyuridine-5'-monophosphate (dUMP) to 2'-deoxythymidine-5'-monophosphate (dTMP) while utilizing 5,10-methylenetetrahydrofolate (mTHF) as the methyl donor and reductant in the reaction, yielding dihydrofolate (DHF) as a by-product. This enzymatic reaction provides an intracellular de novo source of dTMP, an essential precursor for DNA biosynthesis. The protein is Thymidylate synthase of Francisella tularensis subsp. novicida (strain U112).